We begin with the raw amino-acid sequence, 383 residues long: uncharacterized protein (383 aa).

This sequence belongs to the peptidase M20 family.

This is an uncharacterized protein from Staphylococcus epidermidis (strain ATCC 35984 / DSM 28319 / BCRC 17069 / CCUG 31568 / BM 3577 / RP62A).